Reading from the N-terminus, the 459-residue chain is ATP synthase subunit beta 1 (459 aa).

148-155 (GGAGVGKT) is an ATP binding site.

Belongs to the ATPase alpha/beta chains family. As to quaternary structure, F-type ATPases have 2 components, CF(1) - the catalytic core - and CF(0) - the membrane proton channel. CF(1) has five subunits: alpha(3), beta(3), gamma(1), delta(1), epsilon(1). CF(0) has three main subunits: a(1), b(2) and c(9-12). The alpha and beta chains form an alternating ring which encloses part of the gamma chain. CF(1) is attached to CF(0) by a central stalk formed by the gamma and epsilon chains, while a peripheral stalk is formed by the delta and b chains.

Its subcellular location is the cell inner membrane. It carries out the reaction ATP + H2O + 4 H(+)(in) = ADP + phosphate + 5 H(+)(out). In terms of biological role, produces ATP from ADP in the presence of a proton gradient across the membrane. The catalytic sites are hosted primarily by the beta subunits. In Nitrosospira multiformis (strain ATCC 25196 / NCIMB 11849 / C 71), this protein is ATP synthase subunit beta 1.